We begin with the raw amino-acid sequence, 459 residues long: tRNA uridine(34) acetyltransferase (459 aa).

The tract at residues 1-278 (MKKLSRTISG…VPPYVRISRV (278 aa)) is radical S-adenosyl-L-methionine (rSAM). The Radical SAM core domain occupies 6–271 (RTISGVTPVA…IADIKALVPP (266 aa)). 3 residues coordinate [4Fe-4S] cluster: cysteine 23, cysteine 27, and cysteine 30. Lysine 77 is an acetyl-CoA binding site. The interval 308-459 (QKCRCIRCRE…VAGYMCKHLD (152 aa)) is N-acetyltransferase. Zn(2+) is bound by residues cysteine 310, cysteine 312, and cysteine 315. Acetyl-CoA contacts are provided by residues 386 to 389 (ELHV), 409 to 411 (LGR), and tyrosine 442.

This sequence belongs to the ELP3 family. As to quaternary structure, homodimer. The cofactor is [4Fe-4S] cluster.

It catalyses the reaction uridine(34) in tRNA + acetyl-CoA + S-adenosyl-L-methionine + H2O = 5-(carboxymethyl)uridine(34) in tRNA + 5'-deoxyadenosine + L-methionine + CoA + 2 H(+). It functions in the pathway tRNA modification. In terms of biological role, tRNA uridine(34) acetyltransferase, which mediates formation of carboxymethyluridine in the wobble base at position 34 in tRNAs. The proposed mechanism is the following: (i) recruits S-adenosyl-L-methionine and cleaves it to generate a 5'-deoxyadenosine radical (5'-dA) in the radical S-adenosyl-L-methionine (rSAM) region, (ii) hydrolyzes acetyl-CoA in the N-acetyltransferase domain and (iii) an acetyl radical is formed by the products of the two domains and (iv) is transferred onto the C5 position of uridine(34) in the bound tRNA molecule. Does not show protein lysine acetyltransferase activity. This chain is tRNA uridine(34) acetyltransferase, found in Dehalococcoides mccartyi (strain CBDB1).